The following is a 727-amino-acid chain: Phosphoribosylformylglycinamidine synthase subunit PurL (727 aa).

Residue H47 is part of the active site. ATP is bound by residues Y50 and K89. Residue E91 coordinates Mg(2+). Residues 92-95 (SHNH) and R114 each bind substrate. H93 acts as the Proton acceptor in catalysis. Position 115 (D115) interacts with Mg(2+). Position 238 (Q238) interacts with substrate. D266 contacts Mg(2+). 310–312 (ESQ) provides a ligand contact to substrate. Residues D490 and G527 each contribute to the ATP site. N528 contacts Mg(2+). S530 serves as a coordination point for substrate.

Belongs to the FGAMS family. As to quaternary structure, monomer. Part of the FGAM synthase complex composed of 1 PurL, 1 PurQ and 2 PurS subunits.

The protein localises to the cytoplasm. The catalysed reaction is N(2)-formyl-N(1)-(5-phospho-beta-D-ribosyl)glycinamide + L-glutamine + ATP + H2O = 2-formamido-N(1)-(5-O-phospho-beta-D-ribosyl)acetamidine + L-glutamate + ADP + phosphate + H(+). The protein operates within purine metabolism; IMP biosynthesis via de novo pathway; 5-amino-1-(5-phospho-D-ribosyl)imidazole from N(2)-formyl-N(1)-(5-phospho-D-ribosyl)glycinamide: step 1/2. Part of the phosphoribosylformylglycinamidine synthase complex involved in the purines biosynthetic pathway. Catalyzes the ATP-dependent conversion of formylglycinamide ribonucleotide (FGAR) and glutamine to yield formylglycinamidine ribonucleotide (FGAM) and glutamate. The FGAM synthase complex is composed of three subunits. PurQ produces an ammonia molecule by converting glutamine to glutamate. PurL transfers the ammonia molecule to FGAR to form FGAM in an ATP-dependent manner. PurS interacts with PurQ and PurL and is thought to assist in the transfer of the ammonia molecule from PurQ to PurL. In Acidiphilium cryptum (strain JF-5), this protein is Phosphoribosylformylglycinamidine synthase subunit PurL.